Consider the following 122-residue polypeptide: Riboflavin kinase (122 aa).

CDP is bound at residue 4–9 (GFGEGA). 2 residues coordinate Mg(2+): T33 and N35. FMN is bound by residues T84 and E92. 97-100 (VNLR) is a binding site for CDP.

Belongs to the archaeal riboflavin kinase family. Mg(2+) serves as cofactor.

The catalysed reaction is riboflavin + CTP = CDP + FMN + H(+). It functions in the pathway cofactor biosynthesis; FMN biosynthesis; FMN from riboflavin (CTP route): step 1/1. Catalyzes the CTP-dependent phosphorylation of riboflavin (vitamin B2) to form flavin mononucleotide (FMN). In Methanothermobacter thermautotrophicus (strain ATCC 29096 / DSM 1053 / JCM 10044 / NBRC 100330 / Delta H) (Methanobacterium thermoautotrophicum), this protein is Riboflavin kinase.